A 310-amino-acid chain; its full sequence is Ribosomal RNA small subunit methyltransferase H (310 aa).

Residues 33-35, Asp53, Phe79, Asp100, and Gln107 contribute to the S-adenosyl-L-methionine site; that span reads AGH.

It belongs to the methyltransferase superfamily. RsmH family.

The protein localises to the cytoplasm. It catalyses the reaction cytidine(1402) in 16S rRNA + S-adenosyl-L-methionine = N(4)-methylcytidine(1402) in 16S rRNA + S-adenosyl-L-homocysteine + H(+). In terms of biological role, specifically methylates the N4 position of cytidine in position 1402 (C1402) of 16S rRNA. The polypeptide is Ribosomal RNA small subunit methyltransferase H (Clostridium tetani (strain Massachusetts / E88)).